The following is a 200-amino-acid chain: Recombination protein RecR (200 aa).

The segment at 57–72 adopts a C4-type zinc-finger fold; the sequence is CSQCRDFTEEDTCNIC. In terms of domain architecture, Toprim spans 81-176; that stretch reads GLLCVVEMPA…KVSRIAHGIP (96 aa).

The protein belongs to the RecR family.

Its function is as follows. May play a role in DNA repair. It seems to be involved in an RecBC-independent recombinational process of DNA repair. It may act with RecF and RecO. The sequence is that of Recombination protein RecR from Haemophilus influenzae (strain 86-028NP).